Reading from the N-terminus, the 102-residue chain is Small ribosomal subunit protein uS10 (102 aa).

It belongs to the universal ribosomal protein uS10 family. As to quaternary structure, part of the 30S ribosomal subunit.

Functionally, involved in the binding of tRNA to the ribosomes. In Myxococcus xanthus (strain DK1622), this protein is Small ribosomal subunit protein uS10.